Consider the following 286-residue polypeptide: MINEKIWHEKLHRHVGQYFSIDKILYQKKNKYHDIIIFQNSIMGRIMAIDGVVQTTEKDEFIYHEMLTHVPIFYHGLIKNVLIVGGGDGGILREICRHKSIENITMVEIDLNIIDLCKQFFPKHNNNAYKDPRLKIVIDNGLNFVQKTKEKFDLIISDSTDPIGCGKDLFLSDFYFHCKNCLVKNGIFVGQNGVFFLQKNDINQSYKNLKKNFHDVSFYQATIPSYYGGTMMFSWGTDNIDFRQINIKNLEKRIKDKKLTFNYYNSNIHISSFYLPQYIINTLDKS.

Positions 5 to 238 constitute a PABS domain; it reads KIWHEKLHRH…GTMMFSWGTD (234 aa). Spermidine is bound by residues His64 and Asp88. S-methyl-5'-thioadenosine contacts are provided by residues Glu108 and 140–141; that span reads NG. Residue Asp158 is the Proton acceptor of the active site. A spermidine-binding site is contributed by 158-161; the sequence is DSTD.

It belongs to the spermidine/spermine synthase family. Homodimer or homotetramer.

It localises to the cytoplasm. It carries out the reaction S-adenosyl 3-(methylsulfanyl)propylamine + putrescine = S-methyl-5'-thioadenosine + spermidine + H(+). The protein operates within amine and polyamine biosynthesis; spermidine biosynthesis; spermidine from putrescine: step 1/1. Its function is as follows. Catalyzes the irreversible transfer of a propylamine group from the amino donor S-adenosylmethioninamine (decarboxy-AdoMet) to putrescine (1,4-diaminobutane) to yield spermidine. The chain is Polyamine aminopropyltransferase from Buchnera aphidicola subsp. Schizaphis graminum (strain Sg).